A 211-amino-acid polypeptide reads, in one-letter code: Protein-L-isoaspartate O-methyltransferase (211 aa).

The active site involves Ser62.

The protein belongs to the methyltransferase superfamily. L-isoaspartyl/D-aspartyl protein methyltransferase family.

It is found in the cytoplasm. The catalysed reaction is [protein]-L-isoaspartate + S-adenosyl-L-methionine = [protein]-L-isoaspartate alpha-methyl ester + S-adenosyl-L-homocysteine. In terms of biological role, catalyzes the methyl esterification of L-isoaspartyl residues in peptides and proteins that result from spontaneous decomposition of normal L-aspartyl and L-asparaginyl residues. It plays a role in the repair and/or degradation of damaged proteins. This Shewanella pealeana (strain ATCC 700345 / ANG-SQ1) protein is Protein-L-isoaspartate O-methyltransferase.